The chain runs to 317 residues: Melanocyte-stimulating hormone receptor (317 aa).

Residues 1-37 (MPVQGSQRRLLGSLNSTPTATPHLGLAANQTGARCRE) lie on the Extracellular side of the membrane. Residue Asn-29 is glycosylated (N-linked (GlcNAc...) asparagine). Residues 38–63 (VSIPDGLFLSLGLVSLVENVLVVTAI) form a helical membrane-spanning segment. Topologically, residues 64 to 72 (AKNRNLHSP) are cytoplasmic. Residues 73 to 93 (MYCFICCLALSDLLVSGSNML) traverse the membrane as a helical segment. Topologically, residues 94-118 (ETAVTLLLEAGALVARAAVVQQLDN) are extracellular. Residues 119-140 (VIDVITCSSMLSSLCFLGAIAV) traverse the membrane as a helical segment. Over 141–163 (DRYISIFYALRYHSIVTLPRAQR) the chain is Cytoplasmic. Residues 164 to 183 (AIAAIWVASVLCSTLFIAYY) traverse the membrane as a helical segment. Over 184-191 (DHAAVLLC) the chain is Extracellular. Residues 192-211 (LVVFFLAMLVLMAVLYVHML) form a helical membrane-spanning segment. Residues 212 to 240 (ARACQHAQGIARLHKRQRLAHQGFGLKGA) lie on the Cytoplasmic side of the membrane. Residues 241 to 266 (ATLTILLGIFFLCWGPFFLHLTLIVL) form a helical membrane-spanning segment. At 267–279 (CPQHPTCSCIFKN) the chain is on the extracellular side. Residues 280–300 (FNLFLALIICNAIIDPLIYAF) form a helical membrane-spanning segment. Residues 301 to 317 (RSQELRRTLKEVLLCSW) lie on the Cytoplasmic side of the membrane. A lipid anchor (S-palmitoyl cysteine) is attached at Cys-315.

Belongs to the G-protein coupled receptor 1 family. As to quaternary structure, interacts with MGRN1, but does not undergo MGRN1-mediated ubiquitination; this interaction competes with GNAS-binding and thus inhibits agonist-induced cAMP production. Interacts with OPN3; the interaction results in a decrease in MC1R-mediated cAMP signaling and ultimately a decrease in melanin production in melanocytes. Expressed in the adrenal gland.

Its subcellular location is the cell membrane. Receptor for MSH (alpha, beta and gamma) and ACTH. The activity of this receptor is mediated by G proteins which activate adenylate cyclase. Mediates melanogenesis, the production of eumelanin (black/brown) and phaeomelanin (red/yellow), via regulation of cAMP signaling in melanocytes. The sequence is that of Melanocyte-stimulating hormone receptor (MC1R) from Macaca mulatta (Rhesus macaque).